The primary structure comprises 345 residues: Methylthioribose-1-phosphate isomerase (345 aa).

Substrate is bound by residues 47-49 (RGA), Arg90, and Gln197. Residue Asp238 is the Proton donor of the active site. 248 to 249 (NK) provides a ligand contact to substrate.

It belongs to the eIF-2B alpha/beta/delta subunits family. MtnA subfamily.

The catalysed reaction is 5-(methylsulfanyl)-alpha-D-ribose 1-phosphate = 5-(methylsulfanyl)-D-ribulose 1-phosphate. It functions in the pathway amino-acid biosynthesis; L-methionine biosynthesis via salvage pathway; L-methionine from S-methyl-5-thio-alpha-D-ribose 1-phosphate: step 1/6. Catalyzes the interconversion of methylthioribose-1-phosphate (MTR-1-P) into methylthioribulose-1-phosphate (MTRu-1-P). The sequence is that of Methylthioribose-1-phosphate isomerase from Thermoanaerobacter pseudethanolicus (strain ATCC 33223 / 39E) (Clostridium thermohydrosulfuricum).